Here is a 783-residue protein sequence, read N- to C-terminus: Endonuclease MutS2 (783 aa).

An ATP-binding site is contributed by 337-344; that stretch reads GPNTGGKT. Residues 708–783 enclose the Smr domain; it reads LHLRGYRYEE…GFGVTVAELK (76 aa).

The protein belongs to the DNA mismatch repair MutS family. MutS2 subfamily. Homodimer. Binds to stalled ribosomes, contacting rRNA.

Functionally, endonuclease that is involved in the suppression of homologous recombination and thus may have a key role in the control of bacterial genetic diversity. Its function is as follows. Acts as a ribosome collision sensor, splitting the ribosome into its 2 subunits. Detects stalled/collided 70S ribosomes which it binds and splits by an ATP-hydrolysis driven conformational change. Acts upstream of the ribosome quality control system (RQC), a ribosome-associated complex that mediates the extraction of incompletely synthesized nascent chains from stalled ribosomes and their subsequent degradation. Probably generates substrates for RQC. In Staphylococcus haemolyticus (strain JCSC1435), this protein is Endonuclease MutS2.